Here is a 191-residue protein sequence, read N- to C-terminus: Accessory gene regulator protein B (191 aa).

Transmembrane regions (helical) follow at residues 45-65 (IVVY…TVHL), 81-101 (STFA…WILI), 108-128 (IFMI…SPAI), 144-164 (ITAI…KQPF), and 165-185 (NELV…IFFP).

The protein belongs to the AgrB family.

It is found in the cell membrane. Essential for the production of a quorum sensing system signal molecule, the autoinducing peptide (AIP). This quorum sensing system is responsible for the regulation of the expression of virulence factor genes. Involved in the proteolytic processing of AgrD, the precursor of AIP. The polypeptide is Accessory gene regulator protein B (Staphylococcus carnosus (strain TM300)).